We begin with the raw amino-acid sequence, 218 residues long: Ribosomal RNA small subunit methyltransferase G (218 aa).

Residues G82, L87, 137–138 (VE), and R152 each bind S-adenosyl-L-methionine.

Belongs to the methyltransferase superfamily. RNA methyltransferase RsmG family.

It is found in the cytoplasm. The catalysed reaction is guanosine(527) in 16S rRNA + S-adenosyl-L-methionine = N(7)-methylguanosine(527) in 16S rRNA + S-adenosyl-L-homocysteine. Specifically methylates the N7 position of guanine in position 527 of 16S rRNA. In Herminiimonas arsenicoxydans, this protein is Ribosomal RNA small subunit methyltransferase G.